The following is a 383-amino-acid chain: Fructose-1,6-bisphosphate aldolase/phosphatase (383 aa).

Residue Asp-11 is the Proton acceptor; for FBP phosphatase activity of the active site. 4 residues coordinate Mg(2+): Asp-11, His-18, Asp-52, and Asp-53. His-18 is a binding site for beta-D-fructose 1,6-bisphosphate. His-18 serves as a coordination point for dihydroxyacetone phosphate. Residue Tyr-90 participates in beta-D-fructose 1,6-bisphosphate binding. Position 94 (Gln-94) interacts with Mg(2+). 103–104 provides a ligand contact to beta-D-fructose 1,6-bisphosphate; the sequence is GN. Asp-131 contacts Mg(2+). Lys-132 provides a ligand contact to beta-D-fructose 1,6-bisphosphate. Lys-132 serves as a coordination point for dihydroxyacetone phosphate. Tyr-228 acts as the Proton donor/acceptor; for FBP aldolase activity in catalysis. Mg(2+) is bound by residues Lys-231, Asp-232, and Asp-233. Lys-231 (schiff-base intermediate with DHAP; for FBP aldolase activity) is an active-site residue. Beta-D-fructose 1,6-bisphosphate is bound by residues 241–242, Arg-265, Asp-286, and Tyr-347; that span reads QH. Dihydroxyacetone phosphate is bound by residues Arg-265 and Asp-286. A disordered region spans residues 361–383; the sequence is FKKEEDVKKAKPSVYTSKDQGMD. Residues 374-383 are compositionally biased toward polar residues; the sequence is VYTSKDQGMD.

It belongs to the FBP aldolase/phosphatase family. Homooctamer; dimer of tetramers. Mg(2+) is required as a cofactor.

It catalyses the reaction beta-D-fructose 1,6-bisphosphate + H2O = beta-D-fructose 6-phosphate + phosphate. The catalysed reaction is beta-D-fructose 1,6-bisphosphate = D-glyceraldehyde 3-phosphate + dihydroxyacetone phosphate. It participates in carbohydrate biosynthesis; gluconeogenesis. Functionally, catalyzes two subsequent steps in gluconeogenesis: the aldol condensation of dihydroxyacetone phosphate (DHAP) and glyceraldehyde-3-phosphate (GA3P) to fructose-1,6-bisphosphate (FBP), and the dephosphorylation of FBP to fructose-6-phosphate (F6P). The chain is Fructose-1,6-bisphosphate aldolase/phosphatase from Metallosphaera sedula (strain ATCC 51363 / DSM 5348 / JCM 9185 / NBRC 15509 / TH2).